We begin with the raw amino-acid sequence, 262 residues long: tRNA (guanine-N(1)-)-methyltransferase (262 aa).

S-adenosyl-L-methionine is bound by residues glycine 111 and 130–135 (LGDFVL).

This sequence belongs to the RNA methyltransferase TrmD family. Homodimer.

Its subcellular location is the cytoplasm. It catalyses the reaction guanosine(37) in tRNA + S-adenosyl-L-methionine = N(1)-methylguanosine(37) in tRNA + S-adenosyl-L-homocysteine + H(+). In terms of biological role, specifically methylates guanosine-37 in various tRNAs. The sequence is that of tRNA (guanine-N(1)-)-methyltransferase from Desulfitobacterium hafniense (strain Y51).